The chain runs to 426 residues: Chromatin structure-remodeling complex subunit SFH1 (426 aa).

Position 78 is a phosphoserine (serine 78). Residues 201 to 242 (AIMIPITLDIEHMGHTIKDQFLWNYNDDSISPEEFASIYCKD) are interaction with STH1.

The protein belongs to the SNF5 family. As to quaternary structure, interacts directly with STH1. Component of the two forms of the RSC complex composed of at least either RSC1 or RSC2, and ARP7, ARP9, LDB7, NPL6, RSC3, RSC30, RSC4, RSC58, RSC6, RSC8, RSC9, SFH1, STH1, HTL1 and probably RTT102. The complexes interact with histone and histone variant components of centromeric chromatin. In terms of processing, phosphorylated in the G1 phase.

The protein localises to the nucleus. Its function is as follows. Component of the chromatin structure-remodeling complex (RSC), which is involved in transcription regulation and nucleosome positioning. RSC is responsible for the transfer of a histone octamer from a nucleosome core particle to naked DNA. The reaction requires ATP and involves an activated RSC-nucleosome intermediate. Remodeling reaction also involves DNA translocation, DNA twist and conformational change. As a reconfigurer of centromeric and flanking nucleosomes, RSC complex is required both for proper kinetochore function in chromosome segregation and, via a PKC1-dependent signaling pathway, for organization of the cellular cytoskeleton. This subunit is essential for mitotic growth and required for cell cycle progression. This is Chromatin structure-remodeling complex subunit SFH1 (SFH1) from Saccharomyces cerevisiae (strain ATCC 204508 / S288c) (Baker's yeast).